The chain runs to 65 residues: uncharacterized protein (65 aa).

2 helical membrane passes run 4–24 and 45–65; these read TIWLALALVLVLEGLGPMLYP and FGGGLVVAGVVVYYMLRKTIG.

Its subcellular location is the cell membrane. This is an uncharacterized protein from Escherichia coli O157:H7.